Reading from the N-terminus, the 290-residue chain is 3-keto-disaccharide hydrolase (290 aa).

Positions 1–19 (MKKVFYPLACCLAAGVLVS) are cleaved as a signal peptide. Cys20 carries N-palmitoyl cysteine lipidation. Cys20 carries S-diacylglycerol cysteine lipidation.

It localises to the cell membrane. The enzyme catalyses 3-dehydro-alpha,alpha-trehalose + H2O = 3-dehydro-D-glucose + D-glucose. Its function is as follows. 3-keto-disaccharide hydrolase that preferentially hydrolyzes 3-keto-trehalose (3-dehydro-alpha,alpha-trehalose). Important for disaccharide utilization in the human gut. Also shows hydrolysis activity with the glucosinolates glucoraphanin or glucobrassicin, but with much lower efficiency. This chain is 3-keto-disaccharide hydrolase, found in Bacteroides thetaiotaomicron (strain ATCC 29148 / DSM 2079 / JCM 5827 / CCUG 10774 / NCTC 10582 / VPI-5482 / E50).